The primary structure comprises 662 residues: Eukaryotic peptide chain release factor GTP-binding subunit (662 aa).

The segment at 1 to 220 (MASNQPNNGE…PATVTEDATD (220 aa)) is disordered. Over residues 26 to 40 (AKAPTFTPKAAPFIP) the composition is skewed to low complexity. A compositionally biased stretch (polar residues) spans 62 to 89 (YTGQGQNSNSPHPTKSYQQYYQKPTGNT). Residues 91-102 (DEDKSRVPDFSK) are compositionally biased toward basic and acidic residues. Residues 122–134 (GGNTSAPKSTKPI) show a composition bias toward polar residues. Residues 141–158 (TKAPTTTKPAAPAAQSKT) show a composition bias toward low complexity. The residue at position 182 (T182) is a Phosphothreonine. A compositionally biased stretch (low complexity) spans 192–213 (AKTPSAPAAALKKAAEAAEPAT). The tr-type G domain maps to 236 to 464 (KEHVNIVFIG…LDSMTHLERK (229 aa)). A G1 region spans residues 245–252 (GHVDAGKS). 245–252 (GHVDAGKS) provides a ligand contact to GTP. A G2 region spans residues 301 to 305 (GKTVE). The G3 stretch occupies residues 322–325 (DAPG). Residues 384–387 (NKMD) and 428–429 (AY) contribute to the GTP site. Residues 384-387 (NKMD) are G4. The G5 stretch occupies residues 427–429 (SAY). S539 carries the phosphoserine modification.

It belongs to the TRAFAC class translation factor GTPase superfamily. Classic translation factor GTPase family. ERF3 subfamily. As to quaternary structure, component of the eRF1-eRF3-GTP ternary complex, composed of sup45/eRF1, sup35/eRF3 and GTP.

It is found in the cytoplasm. The catalysed reaction is GTP + H2O = GDP + phosphate + H(+). GTPase component of the eRF1-eRF3-GTP ternary complex, a ternary complex that mediates translation termination in response to the termination codons. Sup35/eRF3 mediates sup45/ERF1 delivery to stop codons: The eRF1-eRF3-GTP complex binds to a stop codon in the ribosomal A-site. GTP hydrolysis by sup35/eRF3 induces a conformational change that leads to its dissociation, permitting sup45/eRF1 to accommodate fully in the A-site. This is Eukaryotic peptide chain release factor GTP-binding subunit (sup35) from Schizosaccharomyces pombe (strain 972 / ATCC 24843) (Fission yeast).